We begin with the raw amino-acid sequence, 147 residues long: MRLVVQRVTDASVSVGGETVGEIGLGLMVLVGVTHEDTSEDAAYLAEKLVNLRIFEDEGEKMNLSLLDVGGSVLSVSQFTLYGDTKKGRRPNFTKAAKPDQALQLYEEWNSMLRAKGVTVETGRFGEMMDVKLTNSGPVTFIMDSKA.

A Gly-cisPro motif, important for rejection of L-amino acids motif is present at residues 137-138 (GP).

The protein belongs to the DTD family. Homodimer.

The protein localises to the cytoplasm. The catalysed reaction is glycyl-tRNA(Ala) + H2O = tRNA(Ala) + glycine + H(+). The enzyme catalyses a D-aminoacyl-tRNA + H2O = a tRNA + a D-alpha-amino acid + H(+). Its function is as follows. An aminoacyl-tRNA editing enzyme that deacylates mischarged D-aminoacyl-tRNAs. Also deacylates mischarged glycyl-tRNA(Ala), protecting cells against glycine mischarging by AlaRS. Acts via tRNA-based rather than protein-based catalysis; rejects L-amino acids rather than detecting D-amino acids in the active site. By recycling D-aminoacyl-tRNA to D-amino acids and free tRNA molecules, this enzyme counteracts the toxicity associated with the formation of D-aminoacyl-tRNA entities in vivo and helps enforce protein L-homochirality. The polypeptide is D-aminoacyl-tRNA deacylase (Bacillus licheniformis (strain ATCC 14580 / DSM 13 / JCM 2505 / CCUG 7422 / NBRC 12200 / NCIMB 9375 / NCTC 10341 / NRRL NRS-1264 / Gibson 46)).